Reading from the N-terminus, the 160-residue chain is Protein Vago (160 aa).

An N-terminal signal peptide occupies residues 1–23; that stretch reads MESISSMIYLVAMMSLIIGGSQA.

In terms of tissue distribution, expressed in fat body.

The protein resides in the secreted. In terms of biological role, probably involved in the antiviral immune response. May have a role in controlling viral load in the adult fat body, after infection with viruses such as the Drosophila C virus. This Drosophila melanogaster (Fruit fly) protein is Protein Vago.